The primary structure comprises 255 residues: 5-oxoprolinase subunit A (255 aa).

It belongs to the LamB/PxpA family. In terms of assembly, forms a complex composed of PxpA, PxpB and PxpC.

The catalysed reaction is 5-oxo-L-proline + ATP + 2 H2O = L-glutamate + ADP + phosphate + H(+). Its function is as follows. Catalyzes the cleavage of 5-oxoproline to form L-glutamate coupled to the hydrolysis of ATP to ADP and inorganic phosphate. This is 5-oxoprolinase subunit A from Pyrococcus abyssi (strain GE5 / Orsay).